The following is a 375-amino-acid chain: Isopentenyl-diphosphate delta-isomerase (375 aa).

R8–K9 lines the substrate pocket. Residues T65, G66–T68, S96, and N125 each bind FMN. S96 to R98 serves as a coordination point for substrate. A substrate-binding site is contributed by Q160. Position 161 (E161) interacts with Mg(2+). Residues K192, T222, G273 to R275, and A294 to L295 contribute to the FMN site.

Belongs to the IPP isomerase type 2 family. In terms of assembly, homooctamer. Dimer of tetramers. FMN is required as a cofactor. Requires NADPH as cofactor. It depends on Mg(2+) as a cofactor.

The protein localises to the cytoplasm. The catalysed reaction is isopentenyl diphosphate = dimethylallyl diphosphate. Functionally, involved in the biosynthesis of isoprenoids. Catalyzes the 1,3-allylic rearrangement of the homoallylic substrate isopentenyl (IPP) to its allylic isomer, dimethylallyl diphosphate (DMAPP). The polypeptide is Isopentenyl-diphosphate delta-isomerase (Aeropyrum pernix (strain ATCC 700893 / DSM 11879 / JCM 9820 / NBRC 100138 / K1)).